A 189-amino-acid polypeptide reads, in one-letter code: Potassium-transporting ATPase KdpC subunit (189 aa).

A helical membrane pass occupies residues 10-30; that stretch reads LTLVFCVFFSVCYILVLWIFA.

This sequence belongs to the KdpC family. In terms of assembly, the system is composed of three essential subunits: KdpA, KdpB and KdpC.

Its subcellular location is the cell inner membrane. Functionally, part of the high-affinity ATP-driven potassium transport (or Kdp) system, which catalyzes the hydrolysis of ATP coupled with the electrogenic transport of potassium into the cytoplasm. This subunit acts as a catalytic chaperone that increases the ATP-binding affinity of the ATP-hydrolyzing subunit KdpB by the formation of a transient KdpB/KdpC/ATP ternary complex. This Phocaeicola vulgatus (strain ATCC 8482 / DSM 1447 / JCM 5826 / CCUG 4940 / NBRC 14291 / NCTC 11154) (Bacteroides vulgatus) protein is Potassium-transporting ATPase KdpC subunit.